The chain runs to 363 residues: Peptide chain release factor 1 (363 aa).

At Gln237 the chain carries N5-methylglutamine. A compositionally biased stretch (basic and acidic residues) spans 284 to 296 (EDEKRRSAEESTR). Residues 284–306 (EDEKRRSAEESTRRSLVASGDRS) are disordered.

It belongs to the prokaryotic/mitochondrial release factor family. Post-translationally, methylated by PrmC. Methylation increases the termination efficiency of RF1.

The protein localises to the cytoplasm. In terms of biological role, peptide chain release factor 1 directs the termination of translation in response to the peptide chain termination codons UAG and UAA. The sequence is that of Peptide chain release factor 1 from Shewanella putrefaciens (strain CN-32 / ATCC BAA-453).